Here is a 152-residue protein sequence, read N- to C-terminus: Pleckstrin homology-like domain family A member 2 (152 aa).

Phosphoserine occurs at positions 3 and 42. The PH domain maps to 7–99 (VLREGELEKR…WNAAIALALI (93 aa)). The disordered stretch occupies residues 112–152 (SRQERTAPAAPAEDAVAAAAAAPSEPSEPSRPSPQPKPRTP). The span at 118 to 138 (APAAPAEDAVAAAAAAPSEPS) shows a compositional bias: low complexity. Pro residues predominate over residues 140 to 152 (PSRPSPQPKPRTP). Phosphoserine occurs at positions 141 and 144. Thr-151 is modified (phosphothreonine).

It belongs to the PHLDA2 family. Expressed in placenta and adult prostate gland. In placenta, it is present in all cells of the villous cytotrophoblast. The protein is absent in cells from hydatidiform moles. Hydatidiform mole is a gestation characterized by abnormal development of both fetus and trophoblast. The majority of hydatidiform moles are associated with an excess of paternal to maternal genomes and are likely to result from the abnormal expression of imprinted genes (at protein level). Expressed at low levels in adult liver and lung, and fetal liver. Expressed in adult brain and neuroblastoma, medullablastoma and glioblastoma cell lines.

The protein resides in the cytoplasm. It localises to the membrane. Plays a role in regulating placenta growth. May act via its PH domain that competes with other PH domain-containing proteins, thereby preventing their binding to membrane lipids. The polypeptide is Pleckstrin homology-like domain family A member 2 (PHLDA2) (Homo sapiens (Human)).